Consider the following 446-residue polypeptide: Kynurenine 3-monooxygenase (446 aa).

It belongs to the aromatic-ring hydroxylase family. KMO subfamily. FAD serves as cofactor.

The catalysed reaction is L-kynurenine + NADPH + O2 + H(+) = 3-hydroxy-L-kynurenine + NADP(+) + H2O. It participates in cofactor biosynthesis; NAD(+) biosynthesis; quinolinate from L-kynurenine: step 1/3. Catalyzes the hydroxylation of L-kynurenine (L-Kyn) to form 3-hydroxy-L-kynurenine (L-3OHKyn). Required for synthesis of quinolinic acid. This Flavobacterium johnsoniae (strain ATCC 17061 / DSM 2064 / JCM 8514 / BCRC 14874 / CCUG 350202 / NBRC 14942 / NCIMB 11054 / UW101) (Cytophaga johnsonae) protein is Kynurenine 3-monooxygenase.